The following is a 94-amino-acid chain: Protein RnfH (94 aa).

Belongs to the UPF0125 (RnfH) family.

The chain is Protein RnfH from Yersinia pestis bv. Antiqua (strain Antiqua).